We begin with the raw amino-acid sequence, 684 residues long: Suppressor of presenilin protein 3 (684 aa).

5 C2H2-type zinc fingers span residues 21–43 (YKCH…LRRH), 48–71 (FDCE…LQSH), 123–145 (YKCP…ILSH), 261–283 (YLCR…FRHH), and 291–313 (WTCI…VKMH). Disordered regions lie at residues 337–359 (DLNK…HSDM), 419–440 (KNNS…SKSD), and 469–501 (TSKF…DQFQ). 2 C2H2-type zinc fingers span residues 590–612 (RECT…RDKH) and 618–641 (HTCP…FVDH). A disordered region spans residues 652–684 (LPSSDSEDDNIPVPPDTPQRKKKAPKRGKRRGW). Residues 671–684 (RKKKAPKRGKRRGW) are compositionally biased toward basic residues.

Its subcellular location is the nucleus. Probable transcriptional regulator, which participates in the transcriptional repression of the presenilin protein hop-1. The protein is Suppressor of presenilin protein 3 (spr-3) of Caenorhabditis elegans.